Consider the following 243-residue polypeptide: Probable phosphatase CLI_3563 (243 aa).

Residues His8, His10, His16, His41, Glu74, His102, His132, Asp192, and His194 each contribute to the Zn(2+) site.

This sequence belongs to the PHP family. Zn(2+) serves as cofactor.

The chain is Probable phosphatase CLI_3563 from Clostridium botulinum (strain Langeland / NCTC 10281 / Type F).